The sequence spans 371 residues: Dual-specificity RNA methyltransferase RlmN (371 aa).

Residue glutamate 92 is the Proton acceptor of the active site. The 240-residue stretch at 98-337 (EADRATLCVS…VTVRKTRGDD (240 aa)) folds into the Radical SAM core domain. Cysteine 105 and cysteine 342 are oxidised to a cystine. [4Fe-4S] cluster is bound by residues cysteine 112, cysteine 116, and cysteine 119. S-adenosyl-L-methionine is bound by residues 166 to 167 (GE), serine 198, 220 to 222 (SLH), and asparagine 299. Cysteine 342 serves as the catalytic S-methylcysteine intermediate.

It belongs to the radical SAM superfamily. RlmN family. [4Fe-4S] cluster serves as cofactor.

Its subcellular location is the cytoplasm. It catalyses the reaction adenosine(2503) in 23S rRNA + 2 reduced [2Fe-2S]-[ferredoxin] + 2 S-adenosyl-L-methionine = 2-methyladenosine(2503) in 23S rRNA + 5'-deoxyadenosine + L-methionine + 2 oxidized [2Fe-2S]-[ferredoxin] + S-adenosyl-L-homocysteine. The enzyme catalyses adenosine(37) in tRNA + 2 reduced [2Fe-2S]-[ferredoxin] + 2 S-adenosyl-L-methionine = 2-methyladenosine(37) in tRNA + 5'-deoxyadenosine + L-methionine + 2 oxidized [2Fe-2S]-[ferredoxin] + S-adenosyl-L-homocysteine. Functionally, specifically methylates position 2 of adenine 2503 in 23S rRNA and position 2 of adenine 37 in tRNAs. m2A2503 modification seems to play a crucial role in the proofreading step occurring at the peptidyl transferase center and thus would serve to optimize ribosomal fidelity. The protein is Dual-specificity RNA methyltransferase RlmN of Actinobacillus succinogenes (strain ATCC 55618 / DSM 22257 / CCUG 43843 / 130Z).